The sequence spans 639 residues: MGKIIGIDLGTTNSCVAVLDGGKARVLENAEGDRTTPSIIAYTDDETIVGQPAKRQAVTNPNNTFFAIKRLIGRRFKDDEVQRDVNIMPFKIIAADNGDAWVESRGNKMAPPQVSAEILKKMKKTAEDFLGEEVTEAVITVPAYFNDSQRQATKDAGRIAGLEVKRIINEPTAAALAYGIDKKQGDNIVAVYDLGGGTFDISIIEIDSNDGDQTFEVLATNGDTHLGGEDFDNRLINYLADEFKKEQGLDLRKDPLAMQRLKEAAEKAKIELSSTNQTEVNLPYITADATGPKHLVVKITRAKLESLVEDLIIRTLEPLKVALADADLSVSDINEVILVGGQTRMPKVQEAVTNFFGKEPRKDVNPDEAVAVGAAIQAGVLSGDVKDVLLLDVTPLSLGIETMGSVMTKLIEKNTTIPTKAQQVFSTADDNQSAVTIHVLQGERKQASANKSLGQFNLDGIEPAPRGMPQIEVMFDIDADGILHVSATDKKTGKKQNITIKASSGLSEEEVAQMVRDAEAHAEEDKKFEELVQSRNQADGLVHATKKQVEEAGDALPSEDKAKIEAAMSAVETAVKGNDKEAIEKATQALIEASAKLMEIAQAKAQTQGGAQEGAAKQSNATADDVVDAEFEEVKDDKK.

T198 is modified (phosphothreonine; by autocatalysis). A compositionally biased stretch (low complexity) spans 603–618; that stretch reads AKAQTQGGAQEGAAKQ. Residues 603–639 are disordered; sequence AKAQTQGGAQEGAAKQSNATADDVVDAEFEEVKDDKK. Residues 625-639 show a composition bias toward acidic residues; sequence DVVDAEFEEVKDDKK.

The protein belongs to the heat shock protein 70 family.

Acts as a chaperone. In Shewanella oneidensis (strain ATCC 700550 / JCM 31522 / CIP 106686 / LMG 19005 / NCIMB 14063 / MR-1), this protein is Chaperone protein DnaK.